Reading from the N-terminus, the 174-residue chain is Ubiquinone biosynthesis accessory factor UbiT (174 aa).

Residues 45–133 (LDDGELEFLE…LGLYVKNLMD (89 aa)) enclose the SCP2 domain.

It belongs to the UbiT family.

The protein operates within cofactor biosynthesis; ubiquinone biosynthesis. Required for O(2)-independent ubiquinone (coenzyme Q) biosynthesis. Likely functions as an accessory factor. The polypeptide is Ubiquinone biosynthesis accessory factor UbiT (Escherichia coli O157:H7).